Consider the following 312-residue polypeptide: Short chain dehydrogenase pgmD (312 aa).

The NADP(+) site is built by Val-46, Ile-47, Lys-171, Tyr-207, Lys-211, and Thr-242. The active-site Proton donor is the Tyr-207. Lys-211 functions as the Lowers pKa of active site Tyr in the catalytic mechanism.

This sequence belongs to the short-chain dehydrogenases/reductases (SDR) family.

The protein operates within pigment biosynthesis. Its pathway is secondary metabolite biosynthesis. Its function is as follows. Short chain dehydrogenase; part of the gene cluster that mediates the biosynthesis of pleosporalin A, ascomycone A, as well as a third cryptic naphthoquinone derived pigment, all responsible for the coloration of conidia. Essential for the production of pleosporalin A, but not the 2 other final products. The pathway begins with the biosynthesis of the cyclized heptaketide 3-acetonyl-1,6,8-trihydroxy-2-naphthaldehyde by the NR-PKS pgmA. The C-6 hydroxyl group is further methylated by the O-methyltransferase pgmB to yield fusarubinaldehyde which is in turn oxidized by the cytochrome P450 monooxygenase pgmC at C-9. The C-1 hydroxyl group is then methylated spontaneously. Although pgmE, pgmD and pgmH are essential for the production of pleosporalin A, it is not the case for the 2 other final products and it remains difficult to assign a specific function to each enzyme. PgmF and pgmG seem not to be involved in pigment biosynthesis although they were regulated by the cluster-specific transcription factor pgmR. In Aspergillus terreus, this protein is Short chain dehydrogenase pgmD.